The following is a 154-amino-acid chain: MAAKGNNSSRRSSRALAFQVLYGLNFSPAKDLAQLQEAYCASPDVSDRGGEAHPVGFAWELIEGTWTNQKALDEIITRFAQNWRVERIGKIELTILRLAVYEMLYRADVPPKVAINEGIELSKQFGDDKSRNFINGILDAAAKALEAGTITCKY.

Belongs to the NusB family.

Its function is as follows. Involved in transcription antitermination. Required for transcription of ribosomal RNA (rRNA) genes. Binds specifically to the boxA antiterminator sequence of the ribosomal RNA (rrn) operons. The protein is Transcription antitermination protein NusB of Oleidesulfovibrio alaskensis (strain ATCC BAA-1058 / DSM 17464 / G20) (Desulfovibrio alaskensis).